The sequence spans 676 residues: DNA-directed RNA polymerase subunit beta' (676 aa).

Cys-69, Cys-71, Cys-87, and Cys-90 together coordinate Zn(2+). Asp-485, Asp-487, and Asp-489 together coordinate Mg(2+).

This sequence belongs to the RNA polymerase beta' chain family. RpoC1 subfamily. In terms of assembly, in plastids the minimal PEP RNA polymerase catalytic core is composed of four subunits: alpha, beta, beta', and beta''. When a (nuclear-encoded) sigma factor is associated with the core the holoenzyme is formed, which can initiate transcription. Mg(2+) is required as a cofactor. The cofactor is Zn(2+).

The protein resides in the plastid. It localises to the chloroplast. The enzyme catalyses RNA(n) + a ribonucleoside 5'-triphosphate = RNA(n+1) + diphosphate. In terms of biological role, DNA-dependent RNA polymerase catalyzes the transcription of DNA into RNA using the four ribonucleoside triphosphates as substrates. The sequence is that of DNA-directed RNA polymerase subunit beta' from Fagopyrum esculentum subsp. ancestrale (Wild buckwheat).